A 203-amino-acid polypeptide reads, in one-letter code: METLSQDSLLECQICFNYYSPRRRPKLLDCKHTCCSVCLQQMRASQKDLRCPWCRGVTKLPPGYSVSELPDDPDVVAVIAIPHASENTPVFIKLPSNGCYMWPLPVSKERALLPGDIGCRLLPGNQQKPVTVVTMPMEQQPLHGNIPQDIIEEEHERRGVVKSSTWSGVCTVILVACVLVFLLGIVLHNMSCISKRFTVISCG.

The RING-type zinc-finger motif lies at 12–55 (CQICFNYYSPRRRPKLLDCKHTCCSVCLQQMRASQKDLRCPWCR). The helical transmembrane segment at 167–187 (SGVCTVILVACVLVFLLGIVL) threads the bilayer.

It belongs to the RNF152 family.

It is found in the lysosome membrane. The enzyme catalyses S-ubiquitinyl-[E2 ubiquitin-conjugating enzyme]-L-cysteine + [acceptor protein]-L-lysine = [E2 ubiquitin-conjugating enzyme]-L-cysteine + N(6)-ubiquitinyl-[acceptor protein]-L-lysine.. Its pathway is protein modification; protein ubiquitination. In terms of biological role, E3 ubiquitin-protein ligase that acts as a negative regulator of mTORC1 signaling by mediating ubiquitination of RagA/RRAGA and RHEB. Catalyzes 'Lys-63'-linked polyubiquitination of RagA/RRAGA in response to amino acid starvation, thereby regulating mTORC1 signaling. Also mediates monoubiquitination of RHEB, promoting its association with the TSC-TBC complex and subsequent inhibition. Also mediates 'Lys-48'-linked polyubiquitination of target proteins and their subsequent targeting to the proteasome for degradation. In Xenopus laevis (African clawed frog), this protein is E3 ubiquitin-protein ligase rnf152-B.